Reading from the N-terminus, the 343-residue chain is Lumican (343 aa).

The first 18 residues, 1–18 (MTLNSLPIFLVLISGIFC), serve as a signal peptide directing secretion. The residue at position 19 (glutamine 19) is a Pyrrolidone carboxylic acid. Residues tyrosine 20 and tyrosine 22 each carry the sulfotyrosine modification. The region spanning 31 to 69 (DPFGPSTAVCAPECNCPLSYPTAMYCDNLKLKTIPIVPS) is the LRRNT domain. 8 LRR repeats span residues 70-91 (GIKYLYLRNNMIEAIEENTFDN), 94-117 (DLQWLILDHNHLENSKIKGRVFSK), 120-140 (NLKKLHINYNNLTEAVGPLPK), 141-162 (TLDDLQLSHNKITKVNPGALEG), 165-186 (NLTVIHLQNNQLKTDSISGAFK), 190-211 (SLLYLDLSFNQLTKLPTGLPHS), 212-232 (LLMLYFDNNQISNIPDEYFQG), and 235-255 (TLQYLRLSHNKLTDSGIPGNV). Asparagine 91 carries an N-linked (GlcNAc...) (keratan sulfate) asparagine glycan. A glycan (N-linked (GlcNAc...) (keratan sulfate) asparagine) is linked at asparagine 130. Asparagine 165 is a glycosylation site (N-linked (GlcNAc...) (keratan sulfate) asparagine). Asparagine 257 carries N-linked (GlcNAc...) (keratan sulfate) asparagine glycosylation. LRR repeat units follow at residues 260-281 (SLVELDLSFNQLKSIPTVSENL), 282-301 (ENFYLQVNKINKFPLSSFCK), and 310-330 (KITHLRLDGNNLTRADLPQEM). Cysteine 300 and cysteine 333 are disulfide-bonded. Residue asparagine 320 is glycosylated (N-linked (GlcNAc...) asparagine).

It belongs to the small leucine-rich proteoglycan (SLRP) family. SLRP class II subfamily. As to quaternary structure, binds to laminin. Contains keratan sulfate. As to expression, cornea and other tissues.

It is found in the secreted. The protein localises to the extracellular space. The protein resides in the extracellular matrix. The polypeptide is Lumican (LUM) (Gallus gallus (Chicken)).